Consider the following 368-residue polypeptide: uncharacterized protein (368 aa).

The interval 237–287 (ESLSIPSRRRPSSIAPIGTRPSRKEIAFSNSSTPTDQTLRPPNPPAANGNA) is disordered. The span at 238 to 253 (SLSIPSRRRPSSIAPI) shows a compositional bias: low complexity. Positions 264–276 (FSNSSTPTDQTLR) are enriched in polar residues.

This is an uncharacterized protein from Schizosaccharomyces pombe (strain 972 / ATCC 24843) (Fission yeast).